The primary structure comprises 1026 residues: HEAT repeat-containing protein 4 (1026 aa).

The tract at residues 135-175 (AVKTESSANPEKKLKKSKPASTVREAPRPLIHHPCMHPDML) is disordered. 3 HEAT repeats span residues 530-568 (LLPA…NIMQ), 724-760 (KLMT…QIRD), and 761-794 (KMVL…GQVS).

In Homo sapiens (Human), this protein is HEAT repeat-containing protein 4 (HEATR4).